The sequence spans 1080 residues: Myocardin-related transcription factor B (1080 aa).

An RPEL 1 repeat occupies 40–65 (EVLQLRLQQRRTREQLVDQGIMPPLK). Ser-66 carries the post-translational modification Phosphoserine. RPEL repeat units lie at residues 84–109 (NFLKHKIRSRPDRSELVRMHILEETF) and 128–153 (DDLNEKIAQRPGPMELVEKNILPVDS). Disordered regions lie at residues 170–222 (THGE…AQFT), 234–311 (TPLT…EPQM), 352–384 (PIKTDKNSSSGSNSGSSSSMPARRPGPLPSSLD), and 477–501 (PHVENAHSPLPISPSPSEQSSLSTD). 2 stretches are compositionally biased toward polar residues: residues 188–200 (QPASQESQGSAAS) and 240–259 (QPPTRSTAPVLPTNTVSSAK). Residues 272–287 (NPNDKHRSKKCKDPKP) are compositionally biased toward basic and acidic residues. The segment covering 358–370 (NSSSGSNSGSSSS) has biased composition (low complexity). The 35-residue stretch at 383–417 (LDDLKVSELKTELKLRGLPVSGTKPDLIERLKPYQ) folds into the SAP domain. Residues Ser-531, Ser-535, and Ser-537 each carry the phosphoserine modification. Residues 539 to 594 (SSSTLSTLELDAAEKDRKLQEKEKQIEELKRKLEQEQKLVEVLKMQLEVEKRGQQR) adopt a coiled-coil conformation. The tract at residues 557-585 (LQEKEKQIEELKRKLEQEQKLVEVLKMQL) is required for interaction with itself and with MRTFA. Disordered regions lie at residues 588–646 (EKRG…SVGQ) and 794–846 (LQYQ…PQQF). The segment covering 595–606 (PPDPQPSDPPHP) has biased composition (pro residues). Residue Lys-622 forms a Glycyl lysine isopeptide (Lys-Gly) (interchain with G-Cter in SUMO1) linkage. Residues 794–821 (LQYQRQPGPTNQQPFVSKTSNPALQSRT) are compositionally biased toward polar residues. Ser-913 is subject to Phosphoserine. Residues 969–988 (GTLPSATDTGPLQNSSEDRE) are disordered. Polar residues predominate over residues 972–983 (PSATDTGPLQNS).

In terms of assembly, interacts with MRTFA and SRF. In terms of processing, O-glycosylated. In terms of tissue distribution, widely expressed. High expression in heart, brain and testis. Lower expression in lung, liver and kidney.

The protein resides in the nucleus. Its function is as follows. Acts as a transcriptional coactivator of serum response factor (SRF). Required for skeletal myogenic differentiation. This chain is Myocardin-related transcription factor B (Mrtfb), found in Mus musculus (Mouse).